A 424-amino-acid polypeptide reads, in one-letter code: MSSNNLIKQLQERGLIAQVTDENALAERLAQGPVSLYCGFDPTADSLHLGHLVPLLCLKRFQLAGHKPVALVGGATGLIGDPSFKATERKLNTEATVKEWVEKIRRQVSPFLDFDCGENSAKTANNYDWFGNMDVLAFLRDIGKHFSVNQMINKEAVKQRLNRDDVGISFTEFSYNLLQSYDFARLNEVHGVELQIGGSDQWGNITSGIDLTRRITQKQVFGMTVPLITKSDGTKFGKTEGGAVWLDPKKTSPYKFYQFWINTADADVYRFLKFFTFMNLEDIDALEEEDKNSGKAPRAQYVLAEQVTGMVHGEEGLAAAKRITESLFSGAAADLTEADFAQLAQDGMPVIELEKGADLQQALVNAGLVPSRGQARTMISSNAVAINGEKQSEPEYLFTDSNRLFDRYTLLRRGKKHDCLICWK.

Residue Y37 participates in L-tyrosine binding. A 'HIGH' region motif is present at residues 42 to 51 (PTADSLHLGH). Residues Y175 and Q179 each contribute to the L-tyrosine site. Positions 235 to 239 (KFGKT) match the 'KMSKS' region motif. Position 238 (K238) interacts with ATP. The 58-residue stretch at 357–414 (ADLQQALVNAGLVPSRGQARTMISSNAVAINGEKQSEPEYLFTDSNRLFDRYTLLRRG) folds into the S4 RNA-binding domain.

This sequence belongs to the class-I aminoacyl-tRNA synthetase family. TyrS type 1 subfamily. Homodimer.

The protein resides in the cytoplasm. The enzyme catalyses tRNA(Tyr) + L-tyrosine + ATP = L-tyrosyl-tRNA(Tyr) + AMP + diphosphate + H(+). Catalyzes the attachment of tyrosine to tRNA(Tyr) in a two-step reaction: tyrosine is first activated by ATP to form Tyr-AMP and then transferred to the acceptor end of tRNA(Tyr). In Photorhabdus laumondii subsp. laumondii (strain DSM 15139 / CIP 105565 / TT01) (Photorhabdus luminescens subsp. laumondii), this protein is Tyrosine--tRNA ligase 1.